The chain runs to 436 residues: UPF0597 protein YhaM (436 aa).

Belongs to the UPF0597 family.

The sequence is that of UPF0597 protein YhaM from Shigella dysenteriae serotype 1 (strain Sd197).